A 360-amino-acid chain; its full sequence is Epoxide hydrolase 3 (360 aa).

A helical transmembrane segment spans residues 22–42; the sequence is AFMWSLVFSVALVAAAVYGCI. Residue Asp173 is the Nucleophile of the active site. The active-site Proton donor is the Tyr281. Residue His337 is the Proton acceptor of the active site.

It belongs to the AB hydrolase superfamily. Epoxide hydrolase family.

It is found in the microsome membrane. The enzyme catalyses an epoxide + H2O = an ethanediol. It carries out the reaction 9,10-epoxyoctadecanoate + H2O = 9,10-dihydroxyoctadecanoate. It catalyses the reaction 9,10-epoxy-(12Z)-octadecenoate + H2O = 9,10-dihydroxy-(12Z)-octadecenoate. The catalysed reaction is 8,9-epoxy-(5Z,11Z,14Z)-eicosatrienoate + H2O = 8,9-dihydroxy-(5Z,11Z,14Z)-eicosatrienoate. The enzyme catalyses 11,12-epoxy-(5Z,8Z,14Z)-eicosatrienoate + H2O = 11,12-dihydroxy-(5Z,8Z,14Z)-eicosatrienoate. It carries out the reaction 14,15-epoxy-(5Z,8Z,11Z)-eicosatrienoate + H2O = 14,15-dihydroxy-(5Z,8Z,11Z)-eicosatrienoate. Inhibited by 1-(1-acetylpiperidin-4-yl)-3-(4-(trifl uoromethoxy)phenyl)urea (TPAU), 1-cyclohexyl-3-dodecylurea (CDU), 12-(3-adamantan-1-yl-ureido)-dodecanoic acid (AUDA), 1-((3S, 5S, 7S)-adamantan-1-yl)-3-(5-(2-(2-ethoxyethoxy) ethoxy)pentyl)urea (AEPU) and to a lesser extent by 8-(3-((3S, 5S, 7S)-adamantan-1-yl)ureido) octanoic acid (AUOA). Functionally, catalyzes the hydrolysis of epoxide-containing fatty acids. Active in vitro against epoxyeicosatrienoic acids (EETs) including 8,9-EET, 9,10-EET, 11,12-EET and 14,15-EET and leukotoxin. The chain is Epoxide hydrolase 3 (EPHX3) from Homo sapiens (Human).